Here is a 245-residue protein sequence, read N- to C-terminus: 3-deoxy-manno-octulosonate cytidylyltransferase (245 aa).

This sequence belongs to the KdsB family.

The protein resides in the cytoplasm. The enzyme catalyses 3-deoxy-alpha-D-manno-oct-2-ulosonate + CTP = CMP-3-deoxy-beta-D-manno-octulosonate + diphosphate. It participates in nucleotide-sugar biosynthesis; CMP-3-deoxy-D-manno-octulosonate biosynthesis; CMP-3-deoxy-D-manno-octulosonate from 3-deoxy-D-manno-octulosonate and CTP: step 1/1. Its pathway is bacterial outer membrane biogenesis; lipopolysaccharide biosynthesis. Activates KDO (a required 8-carbon sugar) for incorporation into bacterial lipopolysaccharide in Gram-negative bacteria. In Desulfatibacillum aliphaticivorans, this protein is 3-deoxy-manno-octulosonate cytidylyltransferase.